Here is a 178-residue protein sequence, read N- to C-terminus: Colicin-A immunity protein (178 aa).

The Cytoplasmic segment spans residues 1–13 (MMNEHSIDTDNRK). The chain crosses the membrane as a helical span at residues 14-37 (ANNALYLFIIIGLIPLLCIFVVYY). The Periplasmic portion of the chain corresponds to 38-68 (KTPDALLLRKIATSTENLPSITSSYNPLMTK). A helical transmembrane segment spans residues 69–89 (VMDIYCKTAPFLALILYILTF). Topologically, residues 90-105 (KIRKLINNTDRNTVLR) are cytoplasmic. The helical transmembrane segment at 106-123 (SCLLSPLVYAAIVYLFCF) threads the bilayer. Topologically, residues 124 to 142 (RNFELTTAGRPVRLMATND) are periplasmic. The chain crosses the membrane as a helical span at residues 143 to 165 (ATLLLFYIGLYSIIFFTTYITLF). Residues 166–178 (TPVTAFKLLKKRQ) are Cytoplasmic-facing.

It is found in the cell inner membrane. In terms of biological role, this protein is able to protect a cell, which harbors the plasmid ColA encoding colicin A, against colicin A. The sequence is that of Colicin-A immunity protein (cai) from Citrobacter freundii.